The chain runs to 406 residues: Probable tRNA sulfurtransferase (406 aa).

Positions 60–166 (DQVMNRLKLV…LNGIFLSSET (107 aa)) constitute a THUMP domain. ATP-binding positions include 184–185 (MM), 209–210 (HF), Arg-266, Gly-288, and Gln-297.

It belongs to the ThiI family.

It is found in the cytoplasm. The catalysed reaction is [ThiI sulfur-carrier protein]-S-sulfanyl-L-cysteine + a uridine in tRNA + 2 reduced [2Fe-2S]-[ferredoxin] + ATP + H(+) = [ThiI sulfur-carrier protein]-L-cysteine + a 4-thiouridine in tRNA + 2 oxidized [2Fe-2S]-[ferredoxin] + AMP + diphosphate. It carries out the reaction [ThiS sulfur-carrier protein]-C-terminal Gly-Gly-AMP + S-sulfanyl-L-cysteinyl-[cysteine desulfurase] + AH2 = [ThiS sulfur-carrier protein]-C-terminal-Gly-aminoethanethioate + L-cysteinyl-[cysteine desulfurase] + A + AMP + 2 H(+). Its pathway is cofactor biosynthesis; thiamine diphosphate biosynthesis. Its function is as follows. Catalyzes the ATP-dependent transfer of a sulfur to tRNA to produce 4-thiouridine in position 8 of tRNAs, which functions as a near-UV photosensor. Also catalyzes the transfer of sulfur to the sulfur carrier protein ThiS, forming ThiS-thiocarboxylate. This is a step in the synthesis of thiazole, in the thiamine biosynthesis pathway. The sulfur is donated as persulfide by IscS. The polypeptide is Probable tRNA sulfurtransferase (Limosilactobacillus reuteri subsp. reuteri (strain JCM 1112) (Lactobacillus reuteri)).